Reading from the N-terminus, the 445-residue chain is Methylenetetrahydrofolate--tRNA-(uracil-5-)-methyltransferase TrmFO (445 aa).

Position 9-14 (9-14) interacts with FAD; it reads GGGLAG.

This sequence belongs to the MnmG family. TrmFO subfamily. FAD is required as a cofactor.

The protein resides in the cytoplasm. The enzyme catalyses uridine(54) in tRNA + (6R)-5,10-methylene-5,6,7,8-tetrahydrofolate + NADH + H(+) = 5-methyluridine(54) in tRNA + (6S)-5,6,7,8-tetrahydrofolate + NAD(+). It catalyses the reaction uridine(54) in tRNA + (6R)-5,10-methylene-5,6,7,8-tetrahydrofolate + NADPH + H(+) = 5-methyluridine(54) in tRNA + (6S)-5,6,7,8-tetrahydrofolate + NADP(+). Catalyzes the folate-dependent formation of 5-methyl-uridine at position 54 (M-5-U54) in all tRNAs. The chain is Methylenetetrahydrofolate--tRNA-(uracil-5-)-methyltransferase TrmFO from Aquifex aeolicus (strain VF5).